The chain runs to 343 residues: Protein RecA (343 aa).

G66–T73 is a binding site for ATP.

Belongs to the RecA family.

The protein resides in the cytoplasm. In terms of biological role, can catalyze the hydrolysis of ATP in the presence of single-stranded DNA, the ATP-dependent uptake of single-stranded DNA by duplex DNA, and the ATP-dependent hybridization of homologous single-stranded DNAs. It interacts with LexA causing its activation and leading to its autocatalytic cleavage. The polypeptide is Protein RecA (Rickettsia canadensis (strain McKiel)).